The chain runs to 344 residues: N-acetyl-gamma-glutamyl-phosphate reductase (344 aa).

The active site involves cysteine 147.

The protein belongs to the NAGSA dehydrogenase family. Type 1 subfamily.

Its subcellular location is the cytoplasm. The catalysed reaction is N-acetyl-L-glutamate 5-semialdehyde + phosphate + NADP(+) = N-acetyl-L-glutamyl 5-phosphate + NADPH + H(+). It functions in the pathway amino-acid biosynthesis; L-arginine biosynthesis; N(2)-acetyl-L-ornithine from L-glutamate: step 3/4. Catalyzes the NADPH-dependent reduction of N-acetyl-5-glutamyl phosphate to yield N-acetyl-L-glutamate 5-semialdehyde. In Bacillus amyloliquefaciens (Bacillus velezensis), this protein is N-acetyl-gamma-glutamyl-phosphate reductase.